The sequence spans 491 residues: Aspartyl/glutamyl-tRNA(Asn/Gln) amidotransferase subunit B (491 aa).

This sequence belongs to the GatB/GatE family. GatB subfamily. As to quaternary structure, heterotrimer of A, B and C subunits.

It catalyses the reaction L-glutamyl-tRNA(Gln) + L-glutamine + ATP + H2O = L-glutaminyl-tRNA(Gln) + L-glutamate + ADP + phosphate + H(+). It carries out the reaction L-aspartyl-tRNA(Asn) + L-glutamine + ATP + H2O = L-asparaginyl-tRNA(Asn) + L-glutamate + ADP + phosphate + 2 H(+). In terms of biological role, allows the formation of correctly charged Asn-tRNA(Asn) or Gln-tRNA(Gln) through the transamidation of misacylated Asp-tRNA(Asn) or Glu-tRNA(Gln) in organisms which lack either or both of asparaginyl-tRNA or glutaminyl-tRNA synthetases. The reaction takes place in the presence of glutamine and ATP through an activated phospho-Asp-tRNA(Asn) or phospho-Glu-tRNA(Gln). The protein is Aspartyl/glutamyl-tRNA(Asn/Gln) amidotransferase subunit B of Paraburkholderia xenovorans (strain LB400).